Consider the following 202-residue polypeptide: Hydrogenase expression/formation protein HupD (202 aa).

Glu-28, Asp-74, and His-105 together coordinate Ni(2+).

This sequence belongs to the peptidase A31 family.

Not known. Could be involved in the processing of hydrogenase. In Rhizobium leguminosarum bv. viciae, this protein is Hydrogenase expression/formation protein HupD (hupD).